The primary structure comprises 216 residues: DegV domain-containing protein UU190 (216 aa).

The 215-residue stretch at 1–215 (MLWKNLDELF…LNNFAILIEA (215 aa)) folds into the DegV domain. Ser26 is a hexadecanoate binding site.

Its function is as follows. May bind long-chain fatty acids, such as palmitate, and may play a role in lipid transport or fatty acid metabolism. This Ureaplasma parvum serovar 3 (strain ATCC 700970) protein is DegV domain-containing protein UU190.